Consider the following 172-residue polypeptide: uncharacterized protein (172 aa).

3 consecutive transmembrane segments (helical) span residues 7 to 27, 59 to 79, and 89 to 109; these read ILISYVGLIKLALAGILCYGI, LMIFLAFGFPIFFIGSFLYLF, and FSLTFAITFFVLFIFGLLFVK.

The protein to M.jannaschii MJ0695.

Its subcellular location is the cell membrane. This is an uncharacterized protein from Methanocaldococcus jannaschii (strain ATCC 43067 / DSM 2661 / JAL-1 / JCM 10045 / NBRC 100440) (Methanococcus jannaschii).